The sequence spans 276 residues: Stathmin domain-containing protein 1 (276 aa).

Disordered stretches follow at residues 1-40, 61-106, and 226-250; these read MGCGPSQPAEDRRRVRAPKKGWKEEFKADVSVPHTGENCS, VQMG…RERQ, and GFEPSDLQGGKPLKRKKSKCDATLI. The N-myristoyl glycine moiety is linked to residue Gly2. 2 stretches are compositionally biased toward polar residues: residues 68 to 78 and 87 to 100; these read GTISENSPSPS and DLVTNGLINKPQSL. The SLD domain maps to 118 to 244; it reads QGIIQSHSKV…GKPLKRKKSK (127 aa).

This is Stathmin domain-containing protein 1 (STMND1) from Homo sapiens (Human).